The sequence spans 213 residues: Neuroligin-4, X-linked (213 aa).

The disordered stretch occupies residues phenylalanine 1–glutamate 56. Residues phenylalanine 1–serine 73 lie on the Extracellular side of the membrane. A compositionally biased stretch (basic and acidic residues) spans histidine 46–proline 55. A helical membrane pass occupies residues valine 74 to tyrosine 94. At tyrosine 95 to valine 213 the chain is on the cytoplasmic side. At serine 109 the chain carries Phosphoserine.

This sequence belongs to the type-B carboxylesterase/lipase family. As to quaternary structure, homodimer. Interacts with NRXN1 in a calcium-dependent manner. Interaction with neurexins is mediated by heparan sulfate glycan modification on neurexin. Interacts through its C-terminus with DLG4/PSD-95 third PDZ domain.

Its subcellular location is the cell membrane. The protein resides in the postsynaptic density membrane. Cell surface protein involved in cell-cell-interactions via its interactions with neurexin family members. In Macaca mulatta (Rhesus macaque), this protein is Neuroligin-4, X-linked (NLGN4X).